The following is a 307-amino-acid chain: Protease HtpX homolog (307 aa).

Transmembrane regions (helical) follow at residues 7 to 27 and 28 to 48; these read AILL…IGGA and SGAT…YWNS. Residue histidine 130 participates in Zn(2+) binding. Glutamate 131 is an active-site residue. Histidine 134 is a Zn(2+) binding site. The next 2 helical transmembrane spans lie at 145–165 and 171–191; these read ITAT…FFGG and GPGI…AMLV. A Zn(2+)-binding site is contributed by glutamate 200. Residues 277-307 are disordered; the sequence is AGQSGGGLAPGGPPPDPSSPWNKGSRRGPWG.

The protein belongs to the peptidase M48B family. Requires Zn(2+) as cofactor.

The protein resides in the cell inner membrane. This Nitrobacter winogradskyi (strain ATCC 25391 / DSM 10237 / CIP 104748 / NCIMB 11846 / Nb-255) protein is Protease HtpX homolog.